An 86-amino-acid chain; its full sequence is Immunity protein CdiI-1 (86 aa).

Interacts with the C-terminal fragment (CT) of cognate toxin protein CdiA-EC869.

Functionally, immunity protein component of a toxin-immunity protein module, which functions as a cellular contact-dependent growth inhibition (CDI) system. CDI modules allow bacteria to communicate with and inhibit the growth of closely related neighboring bacteria in a contact-dependent fashion. Neutralizes the toxic activity of cognate toxin CdiA-EC869 (the C-terminal 289 residue CT fragment). Does not inhibit toxic activity of CdiA from other toxin-immunity modules or strains of E.coli. The polypeptide is Immunity protein CdiI-1 (Escherichia coli O157:H7 (strain EC869)).